The following is a 182-amino-acid chain: Ribosome maturation factor RimM (182 aa).

The PRC barrel domain occupies 103–182 (GDDYYWKDLM…VIEADWDPGF (80 aa)).

This sequence belongs to the RimM family. As to quaternary structure, binds ribosomal protein uS19.

Its subcellular location is the cytoplasm. Functionally, an accessory protein needed during the final step in the assembly of 30S ribosomal subunit, possibly for assembly of the head region. Essential for efficient processing of 16S rRNA. May be needed both before and after RbfA during the maturation of 16S rRNA. It has affinity for free ribosomal 30S subunits but not for 70S ribosomes. In Serratia proteamaculans (strain 568), this protein is Ribosome maturation factor RimM.